We begin with the raw amino-acid sequence, 788 residues long: Calpastatin (788 aa).

The segment covering 1-11 (MSQPGPKPAAS) has biased composition (pro residues). 3 disordered regions span residues 1 to 262 (MSQP…TGPV), 289 to 493 (LLEK…MCSI), and 514 to 580 (TLAG…SQEQ). A Phosphoserine modification is found at Ser-11. Over residues 12–21 (PRPSRGAAAR) the composition is skewed to low complexity. Over residues 38 to 49 (PGEKKGSDEKKA) the composition is skewed to basic and acidic residues. Low complexity predominate over residues 65–87 (AATATKVTASSAATSKSPSMSTT). Over residues 99–119 (EGPDQKRPREQAVKTESKKPQ) the composition is skewed to basic and acidic residues. A Glycyl lysine isopeptide (Lys-Gly) (interchain with G-Cter in SUMO2) cross-link involves residue Lys-112. Lys-129 bears the N6-acetyllysine mark. At Ser-165 the chain carries Phosphoserine. Thr-216 bears the Phosphothreonine mark. Ser-219 carries the phosphoserine modification. The segment covering 246–256 (GGHEDTNRDDP) has biased composition (basic and acidic residues). One copy of the Inhibitory domain 1 repeat lies at 251-303 (TNRDDPPYTGPVVLDPMYSTYLEALGIKEGTIPPEYRKLLEKNEGITQPLPDS). Phosphoserine occurs at positions 303 and 324. Composition is skewed to polar residues over residues 318–328 (SDFTCSSPTGK) and 369–380 (QALQALSDSLGT). One copy of the Inhibitory domain 2 repeat lies at 384–436 (DPPSHVSQAEQVKEAKAKEERQEKCGEDEDTVPAEYRLKPAKDKDGKPLLPEP). Basic and acidic residues-rich tracts occupy residues 394–408 (QVKE…QEKC) and 419–430 (YRLKPAKDKDGK). Low complexity predominate over residues 441-453 (KSLSESELIGELS). A phosphoserine mark is found at Ser-444, Ser-446, and Ser-453. Phosphothreonine is present on Thr-479. Residue Ser-518 is modified to Phosphoserine. Residues 522-570 (READPEHEKTVEDKVKEKAKEEEHEKLGEKEETVPPDYRLEEVKDKDGK) are compositionally biased toward basic and acidic residues. The Inhibitory domain 3 repeat unit spans residues 524 to 577 (ADPEHEKTVEDKVKEKAKEEEHEKLGEKEETVPPDYRLEEVKDKDGKPLLPKES). A phosphoserine mark is found at Ser-594, Ser-605, Ser-653, and Ser-655. Residues 620 to 788 (VVSQTPAPST…PKAKEDARHS (169 aa)) are disordered. An Inhibitory domain 4 repeat occupies 661-714 (PDPDENKPLDDKVKEKIKPEHSEKLGERDDTIPPEYRHLLDNDGKDKPEKPPTK). Composition is skewed to basic and acidic residues over residues 661 to 726 (PDPD…RDPI) and 759 to 788 (ASKD…ARHS).

It belongs to the protease inhibitor I27 (calpastatin) family. In terms of tissue distribution, isoform 2 is the major form in all tissues examined. Isoform 1 accounts for 5-10% in tissues such as skeletal muscle, liver and brain, and 30% in myoblasts. Isoforms 4 and 5 are testis-specific. Isoform 6 is highly expressed in heart and skeletal muscle with lower levels in liver, brain and testis. Isoform 7 is expressed at high levels in liver.

Its function is as follows. Specific inhibition of calpain (calcium-dependent cysteine protease). Plays a key role in postmortem tenderization of meat and have been proposed to be involved in muscle protein degradation in living tissue. The sequence is that of Calpastatin (Cast) from Mus musculus (Mouse).